The following is a 418-amino-acid chain: Acyl-[acyl-carrier-protein] desaturase 4, chloroplastic (418 aa).

The transit peptide at 1-70 (MASSGLAVAA…ATAAAPADTA (70 aa)) directs the protein to the chloroplast. Glu152, Glu190, His193, Glu243, Glu276, and His279 together coordinate Fe cation.

Belongs to the fatty acid desaturase type 2 family. In terms of assembly, homodimer. The cofactor is Fe(2+).

The protein resides in the plastid. The protein localises to the chloroplast. The protein operates within lipid metabolism; fatty acid metabolism. In terms of biological role, introduces a cis double bond in the acyl chain of an acyl-[acyl-carrier protein]. This Oryza sativa subsp. japonica (Rice) protein is Acyl-[acyl-carrier-protein] desaturase 4, chloroplastic.